Reading from the N-terminus, the 124-residue chain is Fluoride-specific ion channel FluC 2 (124 aa).

4 consecutive transmembrane segments (helical) span residues 9 to 29 (LGIF…STWL), 34 to 54 (DFPW…IYLV), 67 to 87 (LILA…SLML), and 99 to 119 (LSLI…AYYL). Na(+)-binding residues include Gly77 and Thr80.

The protein belongs to the fluoride channel Fluc/FEX (TC 1.A.43) family.

It is found in the cell membrane. It carries out the reaction fluoride(in) = fluoride(out). Its activity is regulated as follows. Na(+) is not transported, but it plays an essential structural role and its presence is essential for fluoride channel function. Functionally, fluoride-specific ion channel. Important for reducing fluoride concentration in the cell, thus reducing its toxicity. The sequence is that of Fluoride-specific ion channel FluC 2 from Streptococcus pneumoniae serotype 4 (strain ATCC BAA-334 / TIGR4).